The following is a 153-amino-acid chain: MSHPIYELPIDVNQIQTLIPHRYPFLLIDRVIELDLEAKRIVGQKNVTINEPFFQGHFPTRPVMPGVLIIEALAQAGGVMTQLGLGRDALSKLFYMVKVDNARFNKQVVPGDVLILEVQMKRLIRNMGCYYGEAKVNGEIVASAEVMCAGARE.

H57 is a catalytic residue.

This sequence belongs to the thioester dehydratase family. FabZ subfamily.

Its subcellular location is the cytoplasm. The catalysed reaction is a (3R)-hydroxyacyl-[ACP] = a (2E)-enoyl-[ACP] + H2O. Functionally, involved in unsaturated fatty acids biosynthesis. Catalyzes the dehydration of short chain beta-hydroxyacyl-ACPs and long chain saturated and unsaturated beta-hydroxyacyl-ACPs. This chain is 3-hydroxyacyl-[acyl-carrier-protein] dehydratase FabZ, found in Xanthomonas campestris pv. campestris (strain 8004).